We begin with the raw amino-acid sequence, 567 residues long: Sensor histidine kinase MtrB (567 aa).

Residues 1-15 (MIFGSRRRIRGRRGR) are compositionally biased toward basic residues. The disordered stretch occupies residues 1 to 20 (MIFGSRRRIRGRRGRSGPMT). 2 helical membrane-spanning segments follow: residues 42 to 62 (VVALTLGLSLAVILALGFVLT) and 213 to 233 (GTMATGGLVLLVLLAGIALLV). In terms of domain architecture, HAMP spans 235-287 (RQVVVPVRSASRIAERFAEGHLSERMPVRGEDDMARLAVSFNDMAESLSRQIA). The 218-residue stretch at 302 to 519 (DVSHELRTPL…CFRLTLPMVR (218 aa)) folds into the Histidine kinase domain. His305 carries the post-translational modification Phosphohistidine; by autocatalysis. Residues 529-551 (PMKPIPQPVLQPVAQPNPQPMPP) show a composition bias toward pro residues. Residues 529–567 (PMKPIPQPVLQPVAQPNPQPMPPEYKERQRPREHAEWSG) form a disordered region. A compositionally biased stretch (basic and acidic residues) spans 552–567 (EYKERQRPREHAEWSG).

Interacts with MrtA. Interacts with LpqB, probably extracytoplasmically via MtrB's sensor domain. Mg(2+) serves as cofactor. Requires Ca(2+) as cofactor. The C-terminal domain (residues 234-567) autophosphorylates.

Its subcellular location is the cell membrane. The catalysed reaction is ATP + protein L-histidine = ADP + protein N-phospho-L-histidine.. With respect to regulation, ca(2+) ions inhibit the phosphotransfer from MtrB to MtrA. Functionally, member of the two-component regulatory system MtrA/MtrB. Probably functions as a membrane-associated protein kinase that phosphorylates MtrA in response to environmental signals. Autophosphorylates and transfers phosphate to MtrA in vitro. Overexpression of MtrA alone decreases bacterial virulence in mouse infection; co-expression of MtrA and MtrB restores normal bacterial growth, suggesting that bacterial growth in macrophages requires an optimal ratio of MtrB to MtrA. Probably plays a role in cell division. In Mycobacterium tuberculosis (strain ATCC 25618 / H37Rv), this protein is Sensor histidine kinase MtrB (mtrB).